The sequence spans 87 residues: Cell division topological specificity factor (87 aa).

Belongs to the MinE family.

Functionally, prevents the cell division inhibition by proteins MinC and MinD at internal division sites while permitting inhibition at polar sites. This ensures cell division at the proper site by restricting the formation of a division septum at the midpoint of the long axis of the cell. This Delftia acidovorans (strain DSM 14801 / SPH-1) protein is Cell division topological specificity factor.